A 279-amino-acid chain; its full sequence is UPF0173 metal-dependent hydrolase MXAN_1394 (279 aa).

It belongs to the UPF0173 family.

The protein is UPF0173 metal-dependent hydrolase MXAN_1394 of Myxococcus xanthus (strain DK1622).